A 417-amino-acid polypeptide reads, in one-letter code: Gamma-glutamyl phosphate reductase (417 aa).

It belongs to the gamma-glutamyl phosphate reductase family.

Its subcellular location is the cytoplasm. It catalyses the reaction L-glutamate 5-semialdehyde + phosphate + NADP(+) = L-glutamyl 5-phosphate + NADPH + H(+). Its pathway is amino-acid biosynthesis; L-proline biosynthesis; L-glutamate 5-semialdehyde from L-glutamate: step 2/2. Functionally, catalyzes the NADPH-dependent reduction of L-glutamate 5-phosphate into L-glutamate 5-semialdehyde and phosphate. The product spontaneously undergoes cyclization to form 1-pyrroline-5-carboxylate. The sequence is that of Gamma-glutamyl phosphate reductase from Photorhabdus laumondii subsp. laumondii (strain DSM 15139 / CIP 105565 / TT01) (Photorhabdus luminescens subsp. laumondii).